The chain runs to 113 residues: Endoribonuclease SymE (113 aa).

The 46-residue stretch at 29–74 (SRYPDYSRIPAITLKGQWLEAAGFATGTAVVVKVMEGCIVLTAQPA) folds into the SpoVT-AbrB domain.

This sequence belongs to the SymE family.

It is found in the cytoplasm. Its function is as follows. Involved in the degradation and recycling of damaged RNA. It is itself a target for degradation by the ATP-dependent protease Lon. This is Endoribonuclease SymE from Escherichia coli (strain ATCC 8739 / DSM 1576 / NBRC 3972 / NCIMB 8545 / WDCM 00012 / Crooks).